A 173-amino-acid polypeptide reads, in one-letter code: Alpha-crystallin A chain (173 aa).

M1 is modified (N-acetylmethionine). A required for complex formation with BFSP1 and BFSP2 region spans residues 1–63 (MDVTIQHPWF…RTVLDSGISE (63 aa)). Q6 carries the deamidated glutamine; partial modification. S45 carries the post-translational modification Phosphoserine. Position 50 is a deamidated glutamine; partial (Q50). The sHSP domain occupies 52–162 (LFRTVLDSGI…GPSERAIPVS (111 aa)). Residues K70 and K99 each carry the N6-acetyllysine modification. The Zn(2+) site is built by H100, E102, and H107. Positions 145 to 173 (KVASGLDAGPSERAIPVSREEKPSSAPSS) are disordered. A glycan (O-linked (GlcNAc) serine) is linked at S162.

Belongs to the small heat shock protein (HSP20) family. Heteromer composed of three CRYAA and one CRYAB subunits. Zinc coordination is achieved at least by His-100, Glu-102 and His-107. His-100 and Glu-102 come from the same molecule within the oligomer, while His-107 residue is provided by another molecule. Inter-subunit bridging via zinc ions enhances stability, which is crucial as there is no protein turn over in the lens. Can also form homodimers and homotetramers (dimers of dimers) which serve as the building blocks of homooligomers. Part of a complex required for lens intermediate filament formation composed of BFSP1, BFSP2 and CRYAA. In terms of processing, acetylation at Lys-70 may increase chaperone activity. Undergoes age-dependent proteolytical cleavage at the C-terminus.

The protein resides in the cytoplasm. Its subcellular location is the nucleus. In terms of biological role, contributes to the transparency and refractive index of the lens. Acts as a chaperone, preventing aggregation of various proteins under a wide range of stress conditions. Required for the correct formation of lens intermediate filaments as part of a complex composed of BFSP1, BFSP2 and CRYAA. This is Alpha-crystallin A chain (CRYAA) from Erinaceus europaeus (Western European hedgehog).